A 65-amino-acid polypeptide reads, in one-letter code: Probable tautomerase RSp1151 (65 aa).

The active-site Proton acceptor; via imino nitrogen is the Pro2.

It belongs to the 4-oxalocrotonate tautomerase family.

The sequence is that of Probable tautomerase RSp1151 from Ralstonia nicotianae (strain ATCC BAA-1114 / GMI1000) (Ralstonia solanacearum).